The following is a 28-amino-acid chain: Omega-conotoxin-like CnVIIH (28 aa).

3 disulfides stabilise this stretch: Cys1–Cys16, Cys8–Cys20, and Cys15–Cys27. Pro7 is subject to 4-hydroxyproline; partial. Methionine sulfoxide is present on Met12. Cys27 carries the cysteine amide modification.

Belongs to the conotoxin O1 superfamily. Expressed by the venom duct.

It localises to the secreted. Functionally, omega-conotoxins act at presynaptic membranes, they bind and block voltage-gated calcium channels (Cav). This toxin blocks N-type calcium channels (Cav2.2/CACNA1B) with high potency. Unexpectedly, it does not show any blocking activity at amphibian neuromuscular junction. In vivo, when intracerebroventricularly injected into mice causes shaking activity, and, at higher doses, causes mild tremors. When injected intramuscularly into fish, it causes paralysis, and, at higher doses, causes death. The chain is Omega-conotoxin-like CnVIIH from Conus consors (Singed cone).